The sequence spans 339 residues: F420-dependent glucose-6-phosphate dehydrogenase (339 aa).

Position 41 (aspartate 41) interacts with coenzyme F420-(gamma-Glu)n. Histidine 42 functions as the Proton donor in the catalytic mechanism. Coenzyme F420-(gamma-Glu)n-binding positions include threonine 78 and 109 to 110 (TG). Glutamate 111 acts as the Proton acceptor in catalysis. Residues asparagine 114, 177-178 (SG), and 180-181 (AA) each bind coenzyme F420-(gamma-Glu)n. 4 residues coordinate substrate: threonine 195, lysine 198, lysine 259, and arginine 283.

It belongs to the F420-dependent glucose-6-phosphate dehydrogenase family. As to quaternary structure, homodimer.

It carries out the reaction oxidized coenzyme F420-(gamma-L-Glu)(n) + D-glucose 6-phosphate + H(+) = 6-phospho-D-glucono-1,5-lactone + reduced coenzyme F420-(gamma-L-Glu)(n). Its function is as follows. Catalyzes the coenzyme F420-dependent oxidation of glucose 6-phosphate (G6P) to 6-phosphogluconolactone. The sequence is that of F420-dependent glucose-6-phosphate dehydrogenase from Nakamurella multipartita (strain ATCC 700099 / DSM 44233 / CIP 104796 / JCM 9543 / NBRC 105858 / Y-104) (Microsphaera multipartita).